A 452-amino-acid polypeptide reads, in one-letter code: Phosphoglucosamine mutase 2 (452 aa).

The active-site Phosphoserine intermediate is the serine 101. Residues serine 101, aspartate 245, aspartate 247, and aspartate 249 each contribute to the Mg(2+) site. The residue at position 101 (serine 101) is a Phosphoserine.

The protein belongs to the phosphohexose mutase family. Requires Mg(2+) as cofactor. Activated by phosphorylation.

The enzyme catalyses alpha-D-glucosamine 1-phosphate = D-glucosamine 6-phosphate. In terms of biological role, catalyzes the conversion of glucosamine-6-phosphate to glucosamine-1-phosphate. The polypeptide is Phosphoglucosamine mutase 2 (Shewanella amazonensis (strain ATCC BAA-1098 / SB2B)).